The primary structure comprises 229 residues: Imidazoleglycerol-phosphate dehydratase (229 aa).

The protein belongs to the imidazoleglycerol-phosphate dehydratase family.

The enzyme catalyses D-erythro-1-(imidazol-4-yl)glycerol 3-phosphate = 3-(imidazol-4-yl)-2-oxopropyl phosphate + H2O. Its pathway is amino-acid biosynthesis; L-histidine biosynthesis; L-histidine from 5-phospho-alpha-D-ribose 1-diphosphate: step 6/9. In Neurospora crassa (strain ATCC 24698 / 74-OR23-1A / CBS 708.71 / DSM 1257 / FGSC 987), this protein is Imidazoleglycerol-phosphate dehydratase.